The chain runs to 153 residues: Ribosome maturation factor RimP (153 aa).

Belongs to the RimP family.

The protein resides in the cytoplasm. Required for maturation of 30S ribosomal subunits. This Clostridium botulinum (strain Okra / Type B1) protein is Ribosome maturation factor RimP.